We begin with the raw amino-acid sequence, 98 residues long: NADH-ubiquinone oxidoreductase chain 4L (98 aa).

Helical transmembrane passes span 1–21 (MSLV…GLLM), 25–45 (HLMS…VMAT), and 59–81 (MPII…LVMV).

Belongs to the complex I subunit 4L family. As to quaternary structure, core subunit of respiratory chain NADH dehydrogenase (Complex I) which is composed of 45 different subunits.

Its subcellular location is the mitochondrion inner membrane. It catalyses the reaction a ubiquinone + NADH + 5 H(+)(in) = a ubiquinol + NAD(+) + 4 H(+)(out). In terms of biological role, core subunit of the mitochondrial membrane respiratory chain NADH dehydrogenase (Complex I) which catalyzes electron transfer from NADH through the respiratory chain, using ubiquinone as an electron acceptor. Part of the enzyme membrane arm which is embedded in the lipid bilayer and involved in proton translocation. The polypeptide is NADH-ubiquinone oxidoreductase chain 4L (MT-ND4L) (Equus caballus (Horse)).